Consider the following 196-residue polypeptide: Ribosome maturation factor RimP (196 aa).

Residues 163–196 (GLAPSKPTGPAPKRPKPNTNSSSNEPAAKKPRAE) are disordered.

The protein belongs to the RimP family.

The protein resides in the cytoplasm. In terms of biological role, required for maturation of 30S ribosomal subunits. This chain is Ribosome maturation factor RimP, found in Stenotrophomonas maltophilia (strain K279a).